Consider the following 452-residue polypeptide: L-seryl-tRNA(Sec) selenium transferase (452 aa).

Lys285 is modified (N6-(pyridoxal phosphate)lysine).

Belongs to the SelA family. It depends on pyridoxal 5'-phosphate as a cofactor.

The protein resides in the cytoplasm. The catalysed reaction is L-seryl-tRNA(Sec) + selenophosphate + H(+) = L-selenocysteinyl-tRNA(Sec) + phosphate. Its pathway is aminoacyl-tRNA biosynthesis; selenocysteinyl-tRNA(Sec) biosynthesis; selenocysteinyl-tRNA(Sec) from L-seryl-tRNA(Sec) (bacterial route): step 1/1. Functionally, converts seryl-tRNA(Sec) to selenocysteinyl-tRNA(Sec) required for selenoprotein biosynthesis. The chain is L-seryl-tRNA(Sec) selenium transferase from Aquifex aeolicus (strain VF5).